Here is a 291-residue protein sequence, read N- to C-terminus: Pantothenate synthetase 1 (291 aa).

The active-site Proton donor is the His37. 147 to 150 (GEKD) contributes to the ATP binding site. Gln153 contributes to the (R)-pantoate binding site. 184–187 (ISSR) contacts ATP.

It belongs to the pantothenate synthetase family. Homodimer.

It localises to the cytoplasm. It carries out the reaction (R)-pantoate + beta-alanine + ATP = (R)-pantothenate + AMP + diphosphate + H(+). It participates in cofactor biosynthesis; (R)-pantothenate biosynthesis; (R)-pantothenate from (R)-pantoate and beta-alanine: step 1/1. In terms of biological role, catalyzes the condensation of pantoate with beta-alanine in an ATP-dependent reaction via a pantoyl-adenylate intermediate. The chain is Pantothenate synthetase 1 from Frankia alni (strain DSM 45986 / CECT 9034 / ACN14a).